A 569-amino-acid chain; its full sequence is Proline--tRNA ligase (569 aa).

Belongs to the class-II aminoacyl-tRNA synthetase family. ProS type 1 subfamily. In terms of assembly, homodimer.

The protein resides in the cytoplasm. It carries out the reaction tRNA(Pro) + L-proline + ATP = L-prolyl-tRNA(Pro) + AMP + diphosphate. In terms of biological role, catalyzes the attachment of proline to tRNA(Pro) in a two-step reaction: proline is first activated by ATP to form Pro-AMP and then transferred to the acceptor end of tRNA(Pro). As ProRS can inadvertently accommodate and process non-cognate amino acids such as alanine and cysteine, to avoid such errors it has two additional distinct editing activities against alanine. One activity is designated as 'pretransfer' editing and involves the tRNA(Pro)-independent hydrolysis of activated Ala-AMP. The other activity is designated 'posttransfer' editing and involves deacylation of mischarged Ala-tRNA(Pro). The misacylated Cys-tRNA(Pro) is not edited by ProRS. The polypeptide is Proline--tRNA ligase (Endomicrobium trichonymphae).